The chain runs to 107 residues: Large ribosomal subunit protein uL24 (107 aa).

The protein belongs to the universal ribosomal protein uL24 family. Part of the 50S ribosomal subunit.

In terms of biological role, one of two assembly initiator proteins, it binds directly to the 5'-end of the 23S rRNA, where it nucleates assembly of the 50S subunit. Functionally, one of the proteins that surrounds the polypeptide exit tunnel on the outside of the subunit. This Streptomyces avermitilis (strain ATCC 31267 / DSM 46492 / JCM 5070 / NBRC 14893 / NCIMB 12804 / NRRL 8165 / MA-4680) protein is Large ribosomal subunit protein uL24.